Reading from the N-terminus, the 429-residue chain is Serine hydroxymethyltransferase (429 aa).

120 to 122 is a (6S)-5,6,7,8-tetrahydrofolate binding site; that stretch reads GHI. Lys-226 bears the N6-(pyridoxal phosphate)lysine mark.

The protein belongs to the SHMT family. Homodimer. Pyridoxal 5'-phosphate serves as cofactor.

Its subcellular location is the cytoplasm. The protein operates within amino-acid biosynthesis; glycine biosynthesis; glycine from L-serine: step 1/1. In terms of biological role, catalyzes the reversible interconversion of serine and glycine with a modified folate serving as the one-carbon carrier. Also exhibits a pteridine-independent aldolase activity toward beta-hydroxyamino acids, producing glycine and aldehydes, via a retro-aldol mechanism. This chain is Serine hydroxymethyltransferase, found in Pyrobaculum arsenaticum (strain DSM 13514 / JCM 11321 / PZ6).